The following is a 146-amino-acid chain: Single-stranded DNA-binding protein, mitochondrial (146 aa).

A mitochondrion-targeting transit peptide spans 1 to 22 (MQHTRRMLNPLLTGLRNLPARG). The SSB domain occupies 38–142 (VNTVTILGRV…IIADDVLFFR (105 aa)).

Homotetramer. In terms of tissue distribution, uniformly distributed in the early embryo. High levels detected in the anterior and posterior midgut primordia of stage 12 embryos. In larvae, high levels were detected in proliferating tissues including the CNS and digestive tract. In adults, highly expressed in the CNS, digestive tract and ovary.

It is found in the mitochondrion. In terms of biological role, binds preferentially and cooperatively to pyrimidine rich single-stranded DNA (ss-DNA). Required to maintain the copy number of mitochondrial DNA (mtDNA) and plays crucial roles during mtDNA replication that stimulate activity of the gamma complex polymerase PolG1/tam at the replication fork. Promotes PolG1 activity largely by organizing the template DNA and eliminating secondary structures to favor ss-DNA conformations that facilitate PolG1 activity. This chain is Single-stranded DNA-binding protein, mitochondrial (mtSSB), found in Drosophila melanogaster (Fruit fly).